Here is a 540-residue protein sequence, read N- to C-terminus: Gamma-cadinene synthase (540 aa).

Positions 292, 296, 436, 440, and 444 each coordinate Mg(2+). Residues 292–296 (DDTYD) carry the DDXXD motif motif.

The protein belongs to the terpene synthase family. Mg(2+) is required as a cofactor. The cofactor is Mn(2+).

The enzyme catalyses (2E,6E)-farnesyl diphosphate = (+)-gamma-cadinene + diphosphate. The protein operates within secondary metabolite biosynthesis; terpenoid biosynthesis. In terms of biological role, sesquiterpene synthase that catalyzes the cyclization of trans,trans-farnesyl diphosphate (FPP) to gamma cadinene. The chain is Gamma-cadinene synthase (CDS) from Ocimum basilicum (Sweet basil).